Consider the following 872-residue polypeptide: FHIP family protein CBG19667 (872 aa).

A disordered region spans residues 800–841 (SRSSPRSADEHDSTLFYGRSTIPPPGRKPLLREPSHQETLDD). Basic and acidic residues predominate over residues 829–841 (LLREPSHQETLDD).

This sequence belongs to the FHIP family.

In Caenorhabditis briggsae, this protein is FHIP family protein CBG19667.